The chain runs to 96 residues: Large ribosomal subunit protein eL14 (96 aa).

This sequence belongs to the eukaryotic ribosomal protein eL14 family.

The sequence is that of Large ribosomal subunit protein eL14 from Sulfolobus acidocaldarius (strain ATCC 33909 / DSM 639 / JCM 8929 / NBRC 15157 / NCIMB 11770).